Reading from the N-terminus, the 407-residue chain is Zinc finger protein 174 (407 aa).

The disordered stretch occupies residues 1-20 (MAAKMEITLSSNTEASSKQE). Lys26 is covalently cross-linked (Glycyl lysine isopeptide (Lys-Gly) (interchain with G-Cter in SUMO2)). One can recognise an SCAN box domain in the interval 59–124 (GPQEALSQLR…KEIVTLVEDF (66 aa)). The disordered stretch occupies residues 150–270 (GSQLGEQELP…RRQVSSPNAQ (121 aa)). Lys204 is covalently cross-linked (Glycyl lysine isopeptide (Lys-Gly) (interchain with G-Cter in SUMO2)). A compositionally biased stretch (basic and acidic residues) spans 211–221 (PRMRSDNKENP). Glycyl lysine isopeptide (Lys-Gly) (interchain with G-Cter in SUMO2) cross-links involve residues Lys230 and Lys271. 3 consecutive C2H2-type zinc fingers follow at residues 326 to 348 (YKCD…KRVH), 354 to 376 (YTCG…QRIH), and 382 to 405 (YQCG…RLHH).

This sequence belongs to the krueppel C2H2-type zinc-finger protein family. Homodimer. Expressed in a variety of organs, but most strongly in adult testis and ovary followed by small intestine, colon, prostate, thymus, spleen, pancreas, skeletal muscle, heart, brain and kidney. Also expressed in umbilical vein endothelial cells, foreskin fibroblast and Hep-G2 cells.

The protein resides in the nucleus. Functionally, transcriptional repressor. This Homo sapiens (Human) protein is Zinc finger protein 174 (ZNF174).